Consider the following 71-residue polypeptide: Phosphatidylinositol N-acetylglucosaminyltransferase subunit Y (71 aa).

Residues 1–5 (MIRSL) lie on the Cytoplasmic side of the membrane. A helical transmembrane segment spans residues 6 to 26 (PTMTVLIPLVSLAGLLYSASV). Over 27-44 (EEGFPEGCTSASSLCFYS) the chain is Lumenal. The helical transmembrane segment at 45–65 (LLLPVTVPVYVFFHLWTWMGL) threads the bilayer. At 66–71 (KLFRHN) the chain is on the cytoplasmic side.

Component of the glycosylphosphatidylinositol-N-acetylglucosaminyltransferase (GPI-GnT) complex composed at least by PIGA, PIGC, PIGH, PIGP, PIGQ, PIGY and DPM2. Interacts directly with PIGA; this interaction regulates glycosylphosphatidylinositol-N-acetylglucosaminyltransferase activity. Does not interact with Ras proteins.

It is found in the endoplasmic reticulum membrane. It participates in glycolipid biosynthesis; glycosylphosphatidylinositol-anchor biosynthesis. Part of the glycosylphosphatidylinositol-N-acetylglucosaminyltransferase (GPI-GnT) complex that catalyzes the transfer of N-acetylglucosamine from UDP-N-acetylglucosamine to phosphatidylinositol and participates in the first step of GPI biosynthesis. May act by regulating the catalytic subunit PIGA. This is Phosphatidylinositol N-acetylglucosaminyltransferase subunit Y from Mus musculus (Mouse).